A 489-amino-acid chain; its full sequence is Membrane-bound lytic murein transglycosylase F (489 aa).

An N-terminal signal peptide occupies residues 1–32 (MFALTAYRLRCAAWLLATGIFLLLAGCSEAKA). Positions 33–268 (PTALERVQKE…RLKDRYYGHV (236 aa)) are non-LT domain. The tract at residues 269-489 (DVLGYVGAYT…PEEDSGDEKL (221 aa)) is LT domain. The active site involves Glu-315. Positions 466–489 (AESGLHLPGVNKTRPEEDSGDEKL) are disordered. Positions 478–489 (TRPEEDSGDEKL) are enriched in basic and acidic residues.

In the N-terminal section; belongs to the bacterial solute-binding protein 3 family. This sequence in the C-terminal section; belongs to the transglycosylase Slt family.

The protein resides in the cell outer membrane. The catalysed reaction is Exolytic cleavage of the (1-&gt;4)-beta-glycosidic linkage between N-acetylmuramic acid (MurNAc) and N-acetylglucosamine (GlcNAc) residues in peptidoglycan, from either the reducing or the non-reducing ends of the peptidoglycan chains, with concomitant formation of a 1,6-anhydrobond in the MurNAc residue.. Murein-degrading enzyme that degrades murein glycan strands and insoluble, high-molecular weight murein sacculi, with the concomitant formation of a 1,6-anhydromuramoyl product. Lytic transglycosylases (LTs) play an integral role in the metabolism of the peptidoglycan (PG) sacculus. Their lytic action creates space within the PG sacculus to allow for its expansion as well as for the insertion of various structures such as secretion systems and flagella. This chain is Membrane-bound lytic murein transglycosylase F, found in Pseudomonas aeruginosa (strain UCBPP-PA14).